We begin with the raw amino-acid sequence, 753 residues long: Serine/threonine-protein phosphatase with EF-hands 2 (753 aa).

The region spanning Lys-21 to Ser-46 is the IQ domain. Residues Ala-128–Lys-540 are catalytic. Mn(2+)-binding residues include Asp-179, His-181, Asp-208, and Asn-240. His-241 functions as the Proton donor in the catalytic mechanism. Mn(2+) is bound at residue His-292. Disordered stretches follow at residues Cys-318–Asp-382 and Val-409–Gln-435. The segment covering Gln-322 to Arg-333 has biased composition (basic and acidic residues). A compositionally biased stretch (low complexity) spans Leu-348–Leu-361. The span at Ala-366–Cys-377 shows a compositional bias: polar residues. His-488 contacts Mn(2+). 3 consecutive EF-hand domains span residues Ala-568–Leu-603, Arg-652–His-687, and Ile-692–Ser-727. Ca(2+) contacts are provided by Asp-665, Asp-667, Ser-669, Glu-676, Asp-705, Asn-707, Asp-709, His-711, and Glu-716. Residues Asp-732–His-753 are disordered. Residues Pro-737–His-753 show a composition bias toward polar residues.

Belongs to the PPP phosphatase family. Mn(2+) is required as a cofactor. As to expression, retinal specific.

The protein resides in the cytoplasm. The protein localises to the cell projection. It is found in the cilium. It localises to the photoreceptor outer segment. Its subcellular location is the photoreceptor inner segment. The catalysed reaction is O-phospho-L-seryl-[protein] + H2O = L-seryl-[protein] + phosphate. It catalyses the reaction O-phospho-L-threonyl-[protein] + H2O = L-threonyl-[protein] + phosphate. With respect to regulation, activated by calcium. Functionally, may play a role in phototransduction. May dephosphorylate photoactivated rhodopsin. May function as a calcium sensing regulator of ionic currents, energy production or synaptic transmission. The polypeptide is Serine/threonine-protein phosphatase with EF-hands 2 (PPEF2) (Homo sapiens (Human)).